The primary structure comprises 150 residues: Transthyretin (150 aa).

The N-terminal stretch at 1–20 (MAFHSTLLVFLAGLVFLSEA) is a signal peptide. Cysteine 33 bears the Sulfocysteine mark. L-thyroxine is bound by residues lysine 38, glutamate 77, and serine 140.

This sequence belongs to the transthyretin family. As to quaternary structure, homotetramer. Dimer of dimers. In the homotetramer, subunits assemble around a central channel that can accommodate two ligand molecules. In terms of processing, sulfonation of the reactive cysteine Cys-33 enhances the stability of the native conformation of TTR, avoiding misassembly of the protein leading to amyloid formation. Detected in serum (at protein level). Detected in liver and choroid plexus.

It is found in the secreted. Its function is as follows. Thyroid hormone-binding protein. Probably transports thyroxine from the bloodstream to the brain. In Gallus gallus (Chicken), this protein is Transthyretin (TTR).